Here is a 299-residue protein sequence, read N- to C-terminus: Small ribosomal subunit protein uS2 (299 aa).

The segment at 210-299 (AEKEEQTQVV…GAATDNSWAS (90 aa)) is disordered. Residues 275–285 (WASTGTATVGP) show a composition bias toward polar residues.

The protein belongs to the universal ribosomal protein uS2 family. As to quaternary structure, component of the small ribosomal subunit. Mature ribosomes consist of a small (40S) and a large (60S) subunit. The 40S subunit contains about 33 different proteins and 1 molecule of RNA (18S). The 60S subunit contains about 49 different proteins and 3 molecules of RNA (28S, 5.8S and 5S). Interacts with ribosomal protein S21.

The protein resides in the cytoplasm. Its function is as follows. Required for the assembly and/or stability of the 40S ribosomal subunit. Required for the processing of the 20S rRNA-precursor to mature 18S rRNA in a late step of the maturation of 40S ribosomal subunits. The chain is Small ribosomal subunit protein uS2 from Ornithodoros parkeri (Soft tick).